The following is a 183-amino-acid chain: Dual-action ribosomal maturation protein DarP (183 aa).

The protein belongs to the DarP family.

The protein localises to the cytoplasm. Its function is as follows. Member of a network of 50S ribosomal subunit biogenesis factors which assembles along the 30S-50S interface, preventing incorrect 23S rRNA structures from forming. Promotes peptidyl transferase center (PTC) maturation. The chain is Dual-action ribosomal maturation protein DarP from Shigella boydii serotype 18 (strain CDC 3083-94 / BS512).